We begin with the raw amino-acid sequence, 215 residues long: RWD domain-containing protein C1393.09c (215 aa).

Residues E7–I114 form the RWD domain.

It is found in the cytoplasm. Its subcellular location is the nucleus. This Schizosaccharomyces pombe (strain 972 / ATCC 24843) (Fission yeast) protein is RWD domain-containing protein C1393.09c.